The sequence spans 571 residues: Urease subunit alpha (571 aa).

In terms of domain architecture, Urease spans 133-571 (GGIDTHVHFI…LPLTQRYFLF (439 aa)). Ni(2+) contacts are provided by H138, H140, and K221. K221 is modified (N6-carboxylysine). H223 lines the substrate pocket. Ni(2+) is bound by residues H250 and H276. H324 (proton donor) is an active-site residue. Position 364 (D364) interacts with Ni(2+).

The protein belongs to the metallo-dependent hydrolases superfamily. Urease alpha subunit family. As to quaternary structure, heterotrimer of UreA (gamma), UreB (beta) and UreC (alpha) subunits. Three heterotrimers associate to form the active enzyme. Ni cation serves as cofactor. Post-translationally, carboxylation allows a single lysine to coordinate two nickel ions.

The protein resides in the cytoplasm. The catalysed reaction is urea + 2 H2O + H(+) = hydrogencarbonate + 2 NH4(+). It participates in nitrogen metabolism; urea degradation; CO(2) and NH(3) from urea (urease route): step 1/1. The protein is Urease subunit alpha of Staphylococcus aureus (strain bovine RF122 / ET3-1).